The sequence spans 501 residues: Probable cytosol aminopeptidase (501 aa).

Residues lysine 267 and aspartate 272 each contribute to the Mn(2+) site. Lysine 279 is an active-site residue. Residues aspartate 290, aspartate 349, and glutamate 351 each contribute to the Mn(2+) site. Arginine 353 is an active-site residue.

The protein belongs to the peptidase M17 family. The cofactor is Mn(2+).

The protein resides in the cytoplasm. It carries out the reaction Release of an N-terminal amino acid, Xaa-|-Yaa-, in which Xaa is preferably Leu, but may be other amino acids including Pro although not Arg or Lys, and Yaa may be Pro. Amino acid amides and methyl esters are also readily hydrolyzed, but rates on arylamides are exceedingly low.. It catalyses the reaction Release of an N-terminal amino acid, preferentially leucine, but not glutamic or aspartic acids.. Functionally, presumably involved in the processing and regular turnover of intracellular proteins. Catalyzes the removal of unsubstituted N-terminal amino acids from various peptides. This chain is Probable cytosol aminopeptidase, found in Desulfovibrio desulfuricans (strain ATCC 27774 / DSM 6949 / MB).